A 226-amino-acid polypeptide reads, in one-letter code: Large ribosomal subunit protein uL1 (226 aa).

The protein belongs to the universal ribosomal protein uL1 family. Part of the 50S ribosomal subunit.

Functionally, binds directly to 23S rRNA. The L1 stalk is quite mobile in the ribosome, and is involved in E site tRNA release. Protein L1 is also a translational repressor protein, it controls the translation of the L11 operon by binding to its mRNA. The sequence is that of Large ribosomal subunit protein uL1 from Mycoplasma mycoides subsp. mycoides SC (strain CCUG 32753 / NCTC 10114 / PG1).